The primary structure comprises 271 residues: Phosphate import ATP-binding protein PstB 1 (271 aa).

The ABC transporter domain maps to 25 to 266 (LTVEHLNLYY…PTQRRTEDYI (242 aa)). ATP is bound at residue 57–64 (GPSGCGKS).

This sequence belongs to the ABC transporter superfamily. Phosphate importer (TC 3.A.1.7) family. In terms of assembly, the complex is composed of two ATP-binding proteins (PstB), two transmembrane proteins (PstC and PstA) and a solute-binding protein (PstS).

It is found in the cell inner membrane. It carries out the reaction phosphate(out) + ATP + H2O = ADP + 2 phosphate(in) + H(+). Its function is as follows. Part of the ABC transporter complex PstSACB involved in phosphate import. Responsible for energy coupling to the transport system. This is Phosphate import ATP-binding protein PstB 1 from Pectobacterium atrosepticum (strain SCRI 1043 / ATCC BAA-672) (Erwinia carotovora subsp. atroseptica).